A 245-amino-acid polypeptide reads, in one-letter code: MQRWKLTLEYDGRPFVGWQRQDNGPSVQQALEEAIYRFTQETVTVFCAGRTDAGVHALAMVASVDLAREATADKVQAALNFHLKPHPVAVLRVEPVAPDFHARFSCLGRAYLYRILNRRAPAALEAGRVWHVQGGLDAEAMHEAAQRLVGQHDFSSFRASLCQAKSPVKTLSDLSVARVGEEVRIVARARSFLHHQVRNMVGTLKLVGEGRWTADDVSRALAARNRSAAGPTAPAAGLYFTEAWY.

Residue Asp52 is the Nucleophile of the active site. Residue Tyr111 participates in substrate binding.

It belongs to the tRNA pseudouridine synthase TruA family. Homodimer.

It catalyses the reaction uridine(38/39/40) in tRNA = pseudouridine(38/39/40) in tRNA. In terms of biological role, formation of pseudouridine at positions 38, 39 and 40 in the anticodon stem and loop of transfer RNAs. The polypeptide is tRNA pseudouridine synthase A (Rhodospirillum centenum (strain ATCC 51521 / SW)).